The following is a 455-amino-acid chain: uncharacterized protein (455 aa).

11 helical membrane passes run 26-46 (FGPG…QLLI), 53-73 (GAWG…ISIG), 77-97 (LGVM…RSTA), 111-131 (WVVA…LAVI), 146-166 (ALRA…TGVW), 191-211 (AAGV…SLVV), 232-252 (LTVL…AIAV), 256-276 (AHIG…IPAL), 278-298 (ILAA…LIVG), 323-343 (LLVA…GGGG), and 357-377 (ALVL…VVIA). The segment at 384–455 (PKRLRPAPPV…LSDEPPPRAD (72 aa)) is disordered.

Its subcellular location is the cell membrane. This is an uncharacterized protein from Mycobacterium tuberculosis (strain CDC 1551 / Oshkosh).